The primary structure comprises 105 residues: MTFRPLLDRVVIRRAEGNTQSKGGIIIPDTAKEKPQEGEVIAVGPGSRDESGKLIPLDVKIGDTILFGKWSGTEVKIDGEDLLIMKESDIMGIVANTVPTAANAA.

The protein belongs to the GroES chaperonin family. Heptamer of 7 subunits arranged in a ring. Interacts with the chaperonin GroEL.

The protein localises to the cytoplasm. Together with the chaperonin GroEL, plays an essential role in assisting protein folding. The GroEL-GroES system forms a nano-cage that allows encapsulation of the non-native substrate proteins and provides a physical environment optimized to promote and accelerate protein folding. GroES binds to the apical surface of the GroEL ring, thereby capping the opening of the GroEL channel. The chain is Co-chaperonin GroES 3 from Rhizobium meliloti (strain 1021) (Ensifer meliloti).